Consider the following 515-residue polypeptide: MGVTMAVGLAKAAMGKISSAIGERSKRISGAMNEPRRKRKILLVIVCIAMLLDNMLYMVIVPIIPNYLETIRTYKLVYITTPSNGTNGSLLNSTQRAVLERNPNANEDIQIGVLFASKAILQLLSNPFTGTFIDRVGYDIPLLIGLTIMFFSTITFAFGESYAVLFAARSLQGLGSAFADTSGIAMIADKYTEESERTQALGIALAFISFGSLVAPPFGGVLYQFAGKWVPFLVLSFVCLLDGILLLMVVTPFASRTRENMLQGTPIYKLMIDPYIAVVAGALTTCNIPLAFLEPTISNWMKKTMNASEWQMGITWLPAFFPHILGVYITVKLAAKYPNYQWFYGAVGLVIIGASSCTIPACRNFEELIIPLCALCFGIALVDTALLPTLAFLVDIRYVSVYGSVYAIADISYSVAYALGPIMAGQIVHDLGFVQLNLGMGLVNILYAPALLFLRNVCQMKPSLSERNILLEEGPKGLYDTIIMEERKAAKEPHGSSSGNHSVHAVLSDQEGYSE.

Residues 1–40 (MGVTMAVGLAKAAMGKISSAIGERSKRISGAMNEPRRKRK) lie on the Cytoplasmic side of the membrane. A helical membrane pass occupies residues 41 to 61 (ILLVIVCIAMLLDNMLYMVIV). Topologically, residues 62–112 (PIIPNYLETIRTYKLVYITTPSNGTNGSLLNSTQRAVLERNPNANEDIQIG) are lumenal, vesicle. Residues asparagine 84, asparagine 87, and asparagine 92 are each glycosylated (N-linked (GlcNAc...) asparagine). The helical transmembrane segment at 113 to 133 (VLFASKAILQLLSNPFTGTFI) threads the bilayer. Residues 134–139 (DRVGYD) are Cytoplasmic-facing. A helical membrane pass occupies residues 140-160 (IPLLIGLTIMFFSTITFAFGE). Topologically, residues 161–169 (SYAVLFAAR) are lumenal, vesicle. Residues 170–190 (SLQGLGSAFADTSGIAMIADK) traverse the membrane as a helical segment. Residues 191–201 (YTEESERTQAL) are Cytoplasmic-facing. A helical transmembrane segment spans residues 202–222 (GIALAFISFGSLVAPPFGGVL). Residues 223–229 (YQFAGKW) lie on the Lumenal, vesicle side of the membrane. A helical membrane pass occupies residues 230–250 (VPFLVLSFVCLLDGILLLMVV). The Cytoplasmic segment spans residues 251–271 (TPFASRTRENMLQGTPIYKLM). A helical transmembrane segment spans residues 272 to 292 (IDPYIAVVAGALTTCNIPLAF). Over 293-310 (LEPTISNWMKKTMNASEW) the chain is Lumenal, vesicle. The N-linked (GlcNAc...) asparagine glycan is linked to asparagine 306. The chain crosses the membrane as a helical span at residues 311-331 (QMGITWLPAFFPHILGVYITV). At 332–341 (KLAAKYPNYQ) the chain is on the cytoplasmic side. The chain crosses the membrane as a helical span at residues 342–362 (WFYGAVGLVIIGASSCTIPAC). Residues 363 to 367 (RNFEE) are Lumenal, vesicle-facing. A helical transmembrane segment spans residues 368–388 (LIIPLCALCFGIALVDTALLP). Residues 389 to 404 (TLAFLVDIRYVSVYGS) are Cytoplasmic-facing. The helical transmembrane segment at 405–425 (VYAIADISYSVAYALGPIMAG) threads the bilayer. The Lumenal, vesicle segment spans residues 426–432 (QIVHDLG). A helical transmembrane segment spans residues 433-453 (FVQLNLGMGLVNILYAPALLF). The Cytoplasmic portion of the chain corresponds to 454-515 (LRNVCQMKPS…VLSDQEGYSE (62 aa)). Residues 489 to 515 (AAKEPHGSSSGNHSVHAVLSDQEGYSE) are disordered.

The protein belongs to the major facilitator superfamily. Vesicular transporter family. As to expression, electric lobe.

Its subcellular location is the membrane. Functionally, involved in acetylcholine transport into synaptic vesicles. The polypeptide is Vesicular acetylcholine transporter (Tetronarce californica (Pacific electric ray)).